A 67-amino-acid polypeptide reads, in one-letter code: uncharacterized protein (67 aa).

This is an uncharacterized protein from Swinepox virus (strain Kasza) (SWPV).